Consider the following 415-residue polypeptide: Packaging protein 3 (415 aa).

Disordered stretches follow at residues 1 to 56 (MHPV…RRRA) and 66 to 85 (EGLA…VQLK). Positions 1 to 173 (MHPVLRQMRP…VNQEINFQKS (173 aa)) are interaction with packaging protein 1. Over residues 31–46 (PTASGGATSAADAAAD) the composition is skewed to low complexity. S75 is modified (phosphoserine; by host). Over residues 76–85 (PERHPRVQLK) the composition is skewed to basic and acidic residues. A Phosphoserine; by host modification is found at S360. Positions 381–394 (GAGPGLAVAPARAG) are enriched in low complexity. The interval 381–415 (GAGPGLAVAPARAGNVGGVEEYDEDDEYEPEDGEY) is disordered. The span at 400–415 (EEYDEDDEYEPEDGEY) shows a compositional bias: acidic residues.

The protein belongs to the adenoviridae packaging protein 3 family. As to quaternary structure, part of the genome packaging complex composed of packaging proteins 1, 2 and 3; this complex specifically binds to the packaging sequence on the left end of viral genomic DNA and performs packaging of the viral genome. Interacts with hexon-linking protein IIIa; this interaction is required to promote correct genome packaging. In terms of processing, cleaved at different sites by the viral protease during virion maturation.

It localises to the host nucleus. Functionally, involved in viral genome packaging through its interaction with packaging proteins 1 and 2. After proteolytic cleavage by adenovirus protease, L1 52/55k protein is removed from the capsid during viral maturation. This Human adenovirus C serotype 2 (HAdV-2) protein is Packaging protein 3.